A 183-amino-acid polypeptide reads, in one-letter code: Large ribosomal subunit protein eL18 (183 aa).

The disordered stretch occupies residues 150 to 183; sequence RHFGPAPGAPRSHTKPYVRTKGHEKARPSRRANV.

This sequence belongs to the eukaryotic ribosomal protein eL18 family.

The protein localises to the cytoplasm. In Bombyx mori (Silk moth), this protein is Large ribosomal subunit protein eL18 (RpL18).